A 104-amino-acid polypeptide reads, in one-letter code: Large ribosomal subunit protein bL21 (104 aa).

Belongs to the bacterial ribosomal protein bL21 family. In terms of assembly, part of the 50S ribosomal subunit. Contacts protein L20.

This protein binds to 23S rRNA in the presence of protein L20. This Agrobacterium fabrum (strain C58 / ATCC 33970) (Agrobacterium tumefaciens (strain C58)) protein is Large ribosomal subunit protein bL21.